A 121-amino-acid polypeptide reads, in one-letter code: MSNYVVAMEAAWLVRDVENSDDAIGVAVSEAGKRLNDQDLDYVEVEAGVTGCPACGEGLDAAFLAANTALVGLVLELTVFNADSDEHAQRIAKSEVGGALRDVPLEVIDVIEDGDAPAEEA.

Belongs to the UPF0212 family.

This chain is UPF0212 protein VNG_0879C, found in Halobacterium salinarum (strain ATCC 700922 / JCM 11081 / NRC-1) (Halobacterium halobium).